The primary structure comprises 491 residues: G2/mitotic-specific cyclin-A (491 aa).

The segment at 1–21 (MASFQIHQDMSNKENPGIKIP) is disordered. Residues 206-332 (DILEYFRESE…ILKILSFDLC (127 aa)) form the Cyclin N-terminal domain.

It belongs to the cyclin family. Cyclin AB subfamily. Component of the Frs-CycA-Cdk1 complex composed of CycA, Cdk1 and Z600. Interacts (via C-terminus) with Z600. Interacts with otu and (via C-terminus) with bam; the interaction stabilizes CycA by negatively regulating its ubiquitination. Ubiquitinated. Ubiquitination state is negatively regulated by a deubiquitinase complex made up of bam and otu.

Functionally, essential for the control of the cell cycle at the G2/M (mitosis) transition. Interacts with the Cdk1 and Cdk2 protein kinases to form MPF. G2/M cyclins accumulate steadily during G2 and are abruptly destroyed at mitosis. This Drosophila melanogaster (Fruit fly) protein is G2/mitotic-specific cyclin-A (CycA).